A 466-amino-acid chain; its full sequence is Transcription factor SOX-10 (466 aa).

Disordered stretches follow at residues 1–67 (MAEE…DDDK), 160–198 (LRMQHKKDHPDYKYQPRRRKNGKAAQGEAECPGGETDQG), 213–275 (DHRH…DFGN), 355–375 (QVKTETTGPQGPPHYTDQPST), and 433–466 (RPLYTAISDPSPSGPQSHSPTHWEQPVYTTLSRP). Positions 23–32 (LSPSSAPSLG) are enriched in low complexity. The residue at position 24 (Ser-24) is a Phosphoserine. The segment at 62–102 (EADDDKFPVCIREAVSQVLSGYDWTLVPMPVRVNGASKSKP) is dimerization (DIM). A DNA-binding region (HMG box) is located at residues 104-172 (VKRPMNAFMV…QHKKDHPDYK (69 aa)). 2 stretches are compositionally biased toward basic and acidic residues: residues 160 to 173 (LRMQHKKDHPDYKY) and 254 to 271 (ADPKRDGRSLGEGGKPHI). The segment at 228 to 310 (PEHPSGQSHG…LPPNGHPGHV (83 aa)) is transactivation domain (TAM). The tract at residues 353 to 466 (KAQVKTETTG…QPVYTTLSRP (114 aa)) is transactivation domain (TAC). A compositionally biased stretch (polar residues) spans 440-466 (SDPSPSGPQSHSPTHWEQPVYTTLSRP).

In terms of assembly, monomer. Interacts with Armcx3 at the mitochondrial outer membrane surface. Interacts with PAX3. As to expression, predominant expression in glial cells of the nervous system.

Its subcellular location is the cytoplasm. It is found in the nucleus. It localises to the mitochondrion outer membrane. Its function is as follows. Transcription factor that plays a central role in developing and mature glia. Specifically activates expression of myelin genes, during oligodendrocyte (OL) maturation, such as DUSP15 and MYRF, thereby playing a central role in oligodendrocyte maturation and CNS myelination. Once induced, MYRF cooperates with SOX10 to implement the myelination program. Transcriptional activator of MITF, acting synergistically with PAX3. Transcriptional activator of MBP, via binding to the gene promoter. In Rattus norvegicus (Rat), this protein is Transcription factor SOX-10 (Sox10).